The sequence spans 231 residues: Endonuclease NucS (231 aa).

This sequence belongs to the NucS endonuclease family.

It is found in the cytoplasm. Its function is as follows. Cleaves both 3' and 5' ssDNA extremities of branched DNA structures. The polypeptide is Endonuclease NucS (Pseudarthrobacter chlorophenolicus (strain ATCC 700700 / DSM 12829 / CIP 107037 / JCM 12360 / KCTC 9906 / NCIMB 13794 / A6) (Arthrobacter chlorophenolicus)).